Consider the following 199-residue polypeptide: FMN-dependent NADH:quinone oxidoreductase (199 aa).

FMN-binding positions include Ser-17–Ser-19 and Met-87–Phe-90.

This sequence belongs to the azoreductase type 1 family. In terms of assembly, homodimer. Requires FMN as cofactor.

It carries out the reaction 2 a quinone + NADH + H(+) = 2 a 1,4-benzosemiquinone + NAD(+). The enzyme catalyses N,N-dimethyl-1,4-phenylenediamine + anthranilate + 2 NAD(+) = 2-(4-dimethylaminophenyl)diazenylbenzoate + 2 NADH + 2 H(+). Quinone reductase that provides resistance to thiol-specific stress caused by electrophilic quinones. Its function is as follows. Also exhibits azoreductase activity. Catalyzes the reductive cleavage of the azo bond in aromatic azo compounds to the corresponding amines. The polypeptide is FMN-dependent NADH:quinone oxidoreductase (Mycoplasma mycoides subsp. mycoides SC (strain CCUG 32753 / NCTC 10114 / PG1)).